The chain runs to 417 residues: uncharacterized protein (417 aa).

The next 9 membrane-spanning stretches (helical) occupy residues M1–S21, V32–G52, V96–M116, L168–A188, V192–A212, I261–F281, L286–T306, A351–G371, and V392–L412.

It belongs to the concentrative nucleoside transporter (CNT) (TC 2.A.41) family.

It is found in the cell inner membrane. This is an uncharacterized protein from Haemophilus influenzae (strain ATCC 51907 / DSM 11121 / KW20 / Rd).